Here is a 450-residue protein sequence, read N- to C-terminus: UDP-N-acetylmuramoylalanine--D-glutamate ligase (450 aa).

Position 119–125 (G119–T125) interacts with ATP.

It belongs to the MurCDEF family.

It is found in the cytoplasm. The catalysed reaction is UDP-N-acetyl-alpha-D-muramoyl-L-alanine + D-glutamate + ATP = UDP-N-acetyl-alpha-D-muramoyl-L-alanyl-D-glutamate + ADP + phosphate + H(+). Its pathway is cell wall biogenesis; peptidoglycan biosynthesis. Cell wall formation. Catalyzes the addition of glutamate to the nucleotide precursor UDP-N-acetylmuramoyl-L-alanine (UMA). The polypeptide is UDP-N-acetylmuramoylalanine--D-glutamate ligase (Streptococcus pneumoniae (strain Taiwan19F-14)).